The chain runs to 234 residues: NAD-dependent protein deacetylase (234 aa).

The Deacetylase sirtuin-type domain occupies 1-234 (MSDITAAQTT…AVDFFEGVQV (234 aa)). The NAD(+) site is built by A23, T27, R35, Q99, I101, D102, H117, T184, S185, N208, and V226. Residues I101 and D102 each coordinate nicotinamide. H117 (proton acceptor) is an active-site residue.

It belongs to the sirtuin family. Class U subfamily.

It is found in the cytoplasm. It carries out the reaction N(6)-acetyl-L-lysyl-[protein] + NAD(+) + H2O = 2''-O-acetyl-ADP-D-ribose + nicotinamide + L-lysyl-[protein]. Its function is as follows. NAD-dependent protein deacetylase which modulates the activities of several enzymes which are inactive in their acetylated form. This chain is NAD-dependent protein deacetylase, found in Lactiplantibacillus plantarum (strain ATCC BAA-793 / NCIMB 8826 / WCFS1) (Lactobacillus plantarum).